Here is a 376-residue protein sequence, read N- to C-terminus: MSAKPTKINLLNFNRAGLREYFSSIGEKPFRADQMMKWIYQAGVSDFDQMTNLNKALREKLKAQCEVKAPEIAYQQGASDGTIKFALRLEGGQEVETVWIPDEDRATLCVSSQVGCALECTFCSTAQQGFNRNLSVSEIIGQVWRVATTIGLSNDSAKRPITNVVMMGMGEPLLNLKNVVPAMDLMLDDLAFGLSKRRVTLSTSGVVPALDMLGDQIDVALAISLHAPDDKLRDEIVPINKKYPIQEFLAGVRRYLAKSNANQGKVTVEYVMLNGINDSTDQAHELAKVLADTPCKINLIPFNPYPGSPYSRSSNSRIDRFAKVLSSYGLMVVVRKTRGDDIDAACGQLVGDVVDRTKRMLKKQMKGDEISVKMEH.

Residue E96 is the Proton acceptor of the active site. Residues 102–341 (DEDRATLCVS…VVVRKTRGDD (240 aa)) enclose the Radical SAM core domain. An intrachain disulfide couples C109 to C346. C116, C120, and C123 together coordinate [4Fe-4S] cluster. S-adenosyl-L-methionine contacts are provided by residues 170-171 (GE), S202, 224-226 (SLH), and N303. The active-site S-methylcysteine intermediate is C346.

It belongs to the radical SAM superfamily. RlmN family. It depends on [4Fe-4S] cluster as a cofactor.

The protein resides in the cytoplasm. It catalyses the reaction adenosine(2503) in 23S rRNA + 2 reduced [2Fe-2S]-[ferredoxin] + 2 S-adenosyl-L-methionine = 2-methyladenosine(2503) in 23S rRNA + 5'-deoxyadenosine + L-methionine + 2 oxidized [2Fe-2S]-[ferredoxin] + S-adenosyl-L-homocysteine. The catalysed reaction is adenosine(37) in tRNA + 2 reduced [2Fe-2S]-[ferredoxin] + 2 S-adenosyl-L-methionine = 2-methyladenosine(37) in tRNA + 5'-deoxyadenosine + L-methionine + 2 oxidized [2Fe-2S]-[ferredoxin] + S-adenosyl-L-homocysteine. Its function is as follows. Specifically methylates position 2 of adenine 2503 in 23S rRNA and position 2 of adenine 37 in tRNAs. m2A2503 modification seems to play a crucial role in the proofreading step occurring at the peptidyl transferase center and thus would serve to optimize ribosomal fidelity. This chain is Dual-specificity RNA methyltransferase RlmN, found in Pseudoalteromonas atlantica (strain T6c / ATCC BAA-1087).